A 414-amino-acid chain; its full sequence is Serine hydroxymethyltransferase (414 aa).

(6S)-5,6,7,8-tetrahydrofolate-binding positions include leucine 121 and glycine 125–leucine 127. Residue lysine 229 is modified to N6-(pyridoxal phosphate)lysine.

This sequence belongs to the SHMT family. As to quaternary structure, homodimer. It depends on pyridoxal 5'-phosphate as a cofactor.

Its subcellular location is the cytoplasm. It catalyses the reaction (6R)-5,10-methylene-5,6,7,8-tetrahydrofolate + glycine + H2O = (6S)-5,6,7,8-tetrahydrofolate + L-serine. It functions in the pathway one-carbon metabolism; tetrahydrofolate interconversion. Its pathway is amino-acid biosynthesis; glycine biosynthesis; glycine from L-serine: step 1/1. Catalyzes the reversible interconversion of serine and glycine with tetrahydrofolate (THF) serving as the one-carbon carrier. This reaction serves as the major source of one-carbon groups required for the biosynthesis of purines, thymidylate, methionine, and other important biomolecules. Also exhibits THF-independent aldolase activity toward beta-hydroxyamino acids, producing glycine and aldehydes, via a retro-aldol mechanism. This Variovorax paradoxus (strain S110) protein is Serine hydroxymethyltransferase.